The chain runs to 31 residues: Cytochrome b6-f complex subunit 6 (31 aa).

The chain crosses the membrane as a helical span at residues 4–26 (ITSYFGFLLAASTITTALFIGLS).

It belongs to the PetL family. In terms of assembly, the 4 large subunits of the cytochrome b6-f complex are cytochrome b6, subunit IV (17 kDa polypeptide, PetD), cytochrome f and the Rieske protein, while the 4 small subunits are PetG, PetL, PetM and PetN. The complex functions as a dimer.

It is found in the plastid. The protein localises to the chloroplast thylakoid membrane. Functionally, component of the cytochrome b6-f complex, which mediates electron transfer between photosystem II (PSII) and photosystem I (PSI), cyclic electron flow around PSI, and state transitions. PetL is important for photoautotrophic growth as well as for electron transfer efficiency and stability of the cytochrome b6-f complex. This Acorus calamus (Sweet flag) protein is Cytochrome b6-f complex subunit 6.